The chain runs to 423 residues: Osteomodulin (423 aa).

The N-terminal stretch at Met1–Gly20 is a signal peptide. A sulfotyrosine mark is found at Tyr22, Tyr25, Tyr31, Tyr39, Tyr51, and Tyr77. In terms of domain architecture, LRRNT spans Ala53–Met91. LRR repeat units lie at residues His92–Asn113, His116–Ser129, Asn142–Leu164, Glu165–Gly184, Asn187–Ile207, Lys213–Leu233, Ser234–Lys255, Lys258–Leu279, Asn281–Gln294, Asn301–Pro322, and His331–Cys353. 2 N-linked (GlcNAc...) asparagine glycosylation sites follow: Asn113 and Asn121. N-linked (GlcNAc...) asparagine glycosylation occurs at Asn187. 2 N-linked (GlcNAc...) asparagine glycosylation sites follow: Asn242 and Asn278. Asn316 is a glycosylation site (N-linked (GlcNAc...) asparagine). Cys321 and Cys353 are oxidised to a cystine. The interval Tyr383–His408 is disordered. Over residues Asp385–Ser394 the composition is skewed to acidic residues. Sulfotyrosine occurs at positions 413 and 414.

The protein belongs to the small leucine-rich proteoglycan (SLRP) family. SLRP class II subfamily. In terms of assembly, binds the alpha(V)beta(3)-integrin. Post-translationally, glycosylated; contains keratan sulfate. As to expression, osteoblast and odontoblast. Expressed in femoral bone and calvaria tissues. Detected in femoral head, rib, tendon and bone marrow.

The protein localises to the secreted. It is found in the extracellular space. It localises to the extracellular matrix. Functionally, may be implicated in biomineralization processes. Has a function in binding of osteoblasts via the alpha(V)beta(3)-integrin. This Rattus norvegicus (Rat) protein is Osteomodulin (Omd).